The following is a 187-amino-acid chain: Phosphatidylethanolamine-binding protein 2 (187 aa).

S13, S52, and S54 each carry phosphoserine.

It belongs to the phosphatidylethanolamine-binding protein family. In terms of tissue distribution, testis specific.

The protein resides in the cytoplasm. Its function is as follows. May bind to phospholipids. May act as serine protease inhibitor. The protein is Phosphatidylethanolamine-binding protein 2 (Pbp2) of Mus musculus (Mouse).